A 519-amino-acid chain; its full sequence is Threonine synthase, chloroplastic (519 aa).

A chloroplast-targeting transit peptide spans 1 to 40 (MAASCMLRSSFISPGLPQLHHQSTSKPNNGIHFFTPIKAT). Lysine 196 bears the N6-(pyridoxal phosphate)lysine mark. Pyridoxal 5'-phosphate contacts are provided by residues 328–332 (GNLGN) and threonine 465.

The protein belongs to the threonine synthase family. Homodimer. It depends on pyridoxal 5'-phosphate as a cofactor.

It localises to the plastid. It is found in the chloroplast. The catalysed reaction is O-phospho-L-homoserine + H2O = L-threonine + phosphate. Its pathway is amino-acid biosynthesis; L-threonine biosynthesis; L-threonine from L-aspartate: step 5/5. Its activity is regulated as follows. Allosterically activated by S-adenosyl-methionine (SAM). Functionally, catalyzes the gamma-elimination of phosphate from L-phosphohomoserine and the beta-addition of water to produce L-threonine. The protein is Threonine synthase, chloroplastic of Solanum tuberosum (Potato).